The following is a 71-amino-acid chain: Small ribosomal subunit protein bS21 (71 aa).

This sequence belongs to the bacterial ribosomal protein bS21 family.

The protein is Small ribosomal subunit protein bS21 of Nitrosococcus oceani (strain ATCC 19707 / BCRC 17464 / JCM 30415 / NCIMB 11848 / C-107).